The sequence spans 258 residues: Thiazole synthase (258 aa).

Catalysis depends on K98, which acts as the Schiff-base intermediate with DXP. 1-deoxy-D-xylulose 5-phosphate is bound by residues G159, 185 to 186 (AG), and 207 to 208 (NT).

Belongs to the ThiG family. Homotetramer. Forms heterodimers with either ThiH or ThiS.

It is found in the cytoplasm. The catalysed reaction is [ThiS sulfur-carrier protein]-C-terminal-Gly-aminoethanethioate + 2-iminoacetate + 1-deoxy-D-xylulose 5-phosphate = [ThiS sulfur-carrier protein]-C-terminal Gly-Gly + 2-[(2R,5Z)-2-carboxy-4-methylthiazol-5(2H)-ylidene]ethyl phosphate + 2 H2O + H(+). The protein operates within cofactor biosynthesis; thiamine diphosphate biosynthesis. Catalyzes the rearrangement of 1-deoxy-D-xylulose 5-phosphate (DXP) to produce the thiazole phosphate moiety of thiamine. Sulfur is provided by the thiocarboxylate moiety of the carrier protein ThiS. In vitro, sulfur can be provided by H(2)S. This is Thiazole synthase from Cytophaga hutchinsonii (strain ATCC 33406 / DSM 1761 / CIP 103989 / NBRC 15051 / NCIMB 9469 / D465).